A 1446-amino-acid chain; its full sequence is MEAETTVDSLLKEIDMEMEMQSGNDVAQSNGYLLPLQEIGDETMDMLVQYNTENNANSNVNANANANANQWNKVDDPQDLLPMENNYDDDEEQGDESDTTNLLSGNKHLTEEESEQVLVDSKNLVLPPSSSKSNLINNLKQVVEDEVSDSQLSNDMDDTRTLNFSVKGTEPLLADELQDKEPDMIEVSTIYDGPDMISMADDSDTEDIDLLSKAKKPVSPSKIPITNAQTINYFKDAPVEDAKLQTVPDDIPLETKQTTVSNDILSNVETLLPPTLERPSFVISNLKEASQSVENLGFPDYEEDSQSEQETSVLHHTPTDFHAHEFEVFATELPDINVTPSIKPIDIDNNCEHENRLVSEEESKGVISSVPENENLPAVKSNPSSNSISDMLEIRQENKLDETLNMIDHQLSSNKSIDSVKTVSDNNISKSANDGSVEDVADSGKETSDIARNIEESHNSLINLTSGNNFDQSMHNDLIEESNTRVNVTESDITASEDSFNGSHDQNSSLNNLTKNDNGIQQNLEDNHTGIQPEMVVPEEVTTTLPEVNILPASENMLENTSESEISVQFLQNRDNEDKVSSDPQLEENIRSTETVMNTQETFEPKPAKKNQYTDREIEVLNSQKDISEATDNSAVNSRISSSASNFTPVLPPLPKLEKLSIDDPFDDEFETSNESMQMKNSVKPTDYLSIWHLQEQTTKAVSPALSSNSQFSYNSNSTKSSVASPVPATAFKFKPKIVSRSKYYYPDNNIQQEQSMDFIYTKLPSILDPMRRNTINSKKIRQTVIDKRKSHPSFSVDEGNTITEVNIEPEVKVQPISIENDSSSLKANNQDDNESCSSGSQAFVTPSATMDNFDSQFNELGTSFENDLENVLNYFDKDINTNTSSDLIEETTTKNQALPTSKVWSESVDYSLPTGEEPNVDHNIMKKLLNTENSELNECRSDQEHHIIDNAGLGIWRSTANDIATGNVDMFALNGRDISISKSEMTNDIDMGIFSDKKSLVHTPELSPVKSTHVGSPFKVISPKKNTQKDLKDGTTAEKRVSSESEAAQISIMSAVGEITNKDTAVVDDASNKDNIDAGQVGNEGEPIVDKGLLYLHLQGTTKLSLAGINAHHPKYSIEFDNGKNVVRTDWTELDSRGTISLNKEFEIPIDQSINKLIITLMIKYTRLTNELVEVTKRIPIGKKFPFGKMKYRTETQFVERSTVKDEWDYLFARDGSFGRCEILLDESLFEKIRFKEQDLSFDLLNKWSRLQNNSSSKVTQEALYDLPRRPAYKVGSLKVKGCFLERVSNDEKFPVSLKKAKSIVEKYRSQQDITKEGYLLQEGGDLSSQMKNRFFKLNGVELVGYHEVSMKPKIRINMLKVVKVIGKDDVVTGKDNVRNFTTWVLMNDCFQLVFDDGEVITFSDESSLADEQSWYMKLKEVVELNAFHQPWVKRFSENMIINDI.

Disordered regions lie at residues 69–103 (NQWNKVDDPQDLLPMENNYDDDEEQGDESDTTNLL), 358–385 (VSEEESKGVISSVPENENLPAVKSNPSS), 425–446 (DNNISKSANDGSVEDVADSGKE), 495–525 (ASEDSFNGSHDQNSSLNNLTKNDNGIQQNLE), 823–844 (SSSLKANNQDDNESCSSGSQAF), and 1025–1044 (KKNTQKDLKDGTTAEKRVSS). Residues 86–98 (NYDDDEEQGDESD) are compositionally biased toward acidic residues. 2 stretches are compositionally biased toward polar residues: residues 425 to 434 (DNNISKSAND) and 495 to 524 (ASEDSFNGSHDQNSSLNNLTKNDNGIQQNL). Residues 1028–1044 (TQKDLKDGTTAEKRVSS) are compositionally biased toward basic and acidic residues. The PH domain maps to 1314 to 1425 (DITKEGYLLQ…WYMKLKEVVE (112 aa)).

This sequence belongs to the BUD4 family.

The protein localises to the bud neck. In terms of biological role, required for selection of future bud sites. Cooperates with other bud site selection proteins to recognize a spatial landmark during mitosis and they subsequently become a landmark for downstream polarity establishment factors that coordinate budding and cytokinesis. Involved in the septin organization at the bud neck. In Candida glabrata (strain ATCC 2001 / BCRC 20586 / JCM 3761 / NBRC 0622 / NRRL Y-65 / CBS 138) (Yeast), this protein is Bud site selection protein 4 (BUD4).